The primary structure comprises 229 residues: 5'-methylthioadenosine/S-adenosylhomocysteine nucleosidase (229 aa).

Residue E12 is the Proton acceptor of the active site. Residues G78, M152, and 173 to 174 (ME) each bind substrate. The active-site Proton donor is D197.

It belongs to the PNP/UDP phosphorylase family. MtnN subfamily.

The catalysed reaction is S-adenosyl-L-homocysteine + H2O = S-(5-deoxy-D-ribos-5-yl)-L-homocysteine + adenine. It carries out the reaction S-methyl-5'-thioadenosine + H2O = 5-(methylsulfanyl)-D-ribose + adenine. The enzyme catalyses 5'-deoxyadenosine + H2O = 5-deoxy-D-ribose + adenine. Its pathway is amino-acid biosynthesis; L-methionine biosynthesis via salvage pathway; S-methyl-5-thio-alpha-D-ribose 1-phosphate from S-methyl-5'-thioadenosine (hydrolase route): step 1/2. Catalyzes the irreversible cleavage of the glycosidic bond in both 5'-methylthioadenosine (MTA) and S-adenosylhomocysteine (SAH/AdoHcy) to adenine and the corresponding thioribose, 5'-methylthioribose and S-ribosylhomocysteine, respectively. Also cleaves 5'-deoxyadenosine, a toxic by-product of radical S-adenosylmethionine (SAM) enzymes, into 5-deoxyribose and adenine. The protein is 5'-methylthioadenosine/S-adenosylhomocysteine nucleosidase of Oceanobacillus iheyensis (strain DSM 14371 / CIP 107618 / JCM 11309 / KCTC 3954 / HTE831).